The sequence spans 435 residues: ATP-dependent protease ATPase subunit HslU (435 aa).

Residues Ile18, 60–65, Asp248, Glu313, and Arg385 contribute to the ATP site; that span reads GVGKTE.

It belongs to the ClpX chaperone family. HslU subfamily. A double ring-shaped homohexamer of HslV is capped on each side by a ring-shaped HslU homohexamer. The assembly of the HslU/HslV complex is dependent on binding of ATP.

It is found in the cytoplasm. Functionally, ATPase subunit of a proteasome-like degradation complex; this subunit has chaperone activity. The binding of ATP and its subsequent hydrolysis by HslU are essential for unfolding of protein substrates subsequently hydrolyzed by HslV. HslU recognizes the N-terminal part of its protein substrates and unfolds these before they are guided to HslV for hydrolysis. In Rhizobium etli (strain ATCC 51251 / DSM 11541 / JCM 21823 / NBRC 15573 / CFN 42), this protein is ATP-dependent protease ATPase subunit HslU.